We begin with the raw amino-acid sequence, 429 residues long: TNF receptor-associated factor family protein DDB_G0267744 (429 aa).

The RING-type; degenerate zinc finger occupies 22–60 (CVICSHLQVDIYQCVEGHFACKNCFLKMIELKKQCMTCR). TRAF-type zinc fingers lie at residues 151 to 203 (HHLK…GEFN) and 204 to 265 (NHQD…SNSE).

It belongs to the TNF receptor-associated factor family.

It is found in the cytoplasm. Its function is as follows. Probable adapter protein and signal transducer that links members of the tumor necrosis factor receptor family to different signaling pathways by association with the receptor cytoplasmic domain and kinases. This chain is TNF receptor-associated factor family protein DDB_G0267744, found in Dictyostelium discoideum (Social amoeba).